Reading from the N-terminus, the 807-residue chain is Nucleolar complex protein 3 homolog (807 aa).

Disordered stretches follow at residues 27–93 and 167–191; these read KLKN…DMMD and EKPV…EVIE. Residues 40-51 show a composition bias toward basic residues; the sequence is KKYRKEQRKLRQ. The span at 52–78 shows a compositional bias: basic and acidic residues; the sequence is AVKDAVSKKPIPLEDPKSKRPVKRMER. Composition is skewed to acidic residues over residues 79-93 and 174-190; these read EEDE…DMMD and QQEE…EEVI. Lys-332 participates in a covalent cross-link: Glycyl lysine isopeptide (Lys-Gly) (interchain with G-Cter in SUMO2). Positions 449–489 form a coiled coil; sequence FKEKRKTLSRMQRKWKKAEEKLERELREAEASESTEKKLKL.

Belongs to the CBF/MAK21 family.

It is found in the nucleus. Its subcellular location is the nucleolus. The protein resides in the nucleus speckle. In terms of biological role, may be required for adipogenesis. The sequence is that of Nucleolar complex protein 3 homolog (Noc3l) from Mus musculus (Mouse).